We begin with the raw amino-acid sequence, 2555 residues long: Neurogenic locus notch homolog protein 1 (2555 aa).

The signal sequence occupies residues 1–18; it reads MPPLLAPLLCLALLPALA. The Extracellular segment spans residues 19 to 1735; that stretch reads ARGPRCSQPG…VEPPPPAQLH (1717 aa). 4 EGF-like domains span residues 20–58, 59–99, 102–139, and 140–176; these read RGPR…PRCQ, DPNP…PLCL, LDNA…KSCQ, and QADP…PTCR. Disulfide bonds link cysteine 24/cysteine 37, cysteine 31/cysteine 46, cysteine 48/cysteine 57, cysteine 63/cysteine 74, cysteine 68/cysteine 87, cysteine 89/cysteine 98, cysteine 106/cysteine 117, cysteine 111/cysteine 127, cysteine 129/cysteine 138, cysteine 144/cysteine 155, cysteine 149/cysteine 164, cysteine 166/cysteine 175, cysteine 182/cysteine 195, cysteine 189/cysteine 204, cysteine 206/cysteine 215, cysteine 222/cysteine 233, cysteine 227/cysteine 243, cysteine 245/cysteine 254, cysteine 261/cysteine 272, cysteine 266/cysteine 281, cysteine 283/cysteine 292, cysteine 299/cysteine 312, cysteine 306/cysteine 321, cysteine 323/cysteine 332, cysteine 339/cysteine 350, cysteine 344/cysteine 359, cysteine 361/cysteine 370, cysteine 376/cysteine 387, cysteine 381/cysteine 398, cysteine 400/cysteine 409, cysteine 416/cysteine 429, cysteine 423/cysteine 438, and cysteine 440/cysteine 449. N-linked (GlcNAc...) asparagine glycosylation occurs at asparagine 41. O-linked (Glc...) serine glycosylation occurs at serine 65. An O-linked (Fuc...) threonine glycan is attached at threonine 73. O-linked (Fuc...) threonine glycosylation is present at threonine 116. Serine 146 is a glycosylation site (O-linked (Glc...) serine). Residues 178–216 form the EGF-like 5; calcium-binding domain; sequence DVNECGQKPGLCRHGGTCHNEVGSYRCVCRATHTGPNCE. Residue threonine 194 is glycosylated (O-linked (Fuc...) threonine). One can recognise an EGF-like 6 domain in the interval 218–255; sequence PYVPCSPSPCQNGGTCRPTGDVTHECACLPGFTGQNCE. Threonine 232 is a glycosylation site (O-linked (Fuc...) threonine; alternate). Threonine 232 is a glycosylation site (O-linked (GalNAc...) threonine; alternate). One can recognise an EGF-like 7; calcium-binding domain in the interval 257 to 293; that stretch reads NIDDCPGNNCKNGGACVDGVNTYNCRCPPEWTGQYCT. In terms of domain architecture, EGF-like 8; calcium-binding spans 295-333; the sequence is DVDECQLMPNACQNGGTCHNTHGGYNCVCVNGWTGEDCS. O-linked (Fuc...) threonine glycosylation is present at threonine 311. In terms of domain architecture, EGF-like 9; calcium-binding spans 335–371; that stretch reads NIDDCASAACFHGATCHDRVASFYCECPHGRTGLLCH. O-linked (Glc...) serine glycosylation occurs at serine 341. Residue threonine 349 is glycosylated (O-linked (Fuc...) threonine). Positions 372-410 constitute an EGF-like 10 domain; sequence LNDACISNPCNEGSNCDTNPVNGKAICTCPSGYTGPACS. Serine 378 carries O-linked (Glc...) serine glycosylation. The 39-residue stretch at 412 to 450 folds into the EGF-like 11; calcium-binding domain; sequence DVDECSLGANPCEHAGKCINTLGSFECQCLQGYTGPRCE. Residues 420 to 421 are interaction with DLL4; it reads AN. Residues threonine 432 and serine 435 each contribute to the Ca(2+) site. Serine 435 carries O-linked (Glc...) serine glycosylation. The interaction with DLL4 stretch occupies residues 448–452; it reads RCEID. Aspartate 452, valine 453, and glutamate 455 together coordinate Ca(2+). The EGF-like 12; calcium-binding domain maps to 452-488; it reads DVNECVSNPCQNDATCLDQIGEFQCICMPGYEGVHCE. Disulfide bonds link cysteine 456–cysteine 467, cysteine 461–cysteine 476, and cysteine 478–cysteine 487. Serine 458 is a glycosylation site (O-linked (Glc...) serine). Residue threonine 466 is glycosylated (O-linked (Fuc...) threonine). The Ca(2+) site is built by aspartate 469 and glutamine 470. 3 residues coordinate Ca(2+): asparagine 490, threonine 491, and glutamate 493. Positions 490–526 constitute an EGF-like 13; calcium-binding domain; the sequence is NTDECASSPCLHNGRCLDKINEFQCECPTGFTGHLCQ. 74 cysteine pairs are disulfide-bonded: cysteine 494–cysteine 505, cysteine 499–cysteine 514, cysteine 516–cysteine 525, cysteine 532–cysteine 543, cysteine 537–cysteine 552, cysteine 554–cysteine 563, cysteine 570–cysteine 580, cysteine 575–cysteine 589, cysteine 591–cysteine 600, cysteine 607–cysteine 618, cysteine 612–cysteine 627, cysteine 629–cysteine 638, cysteine 645–cysteine 655, cysteine 650–cysteine 664, cysteine 666–cysteine 675, cysteine 682–cysteine 693, cysteine 687–cysteine 702, cysteine 704–cysteine 713, cysteine 720–cysteine 730, cysteine 725–cysteine 739, cysteine 741–cysteine 750, cysteine 757–cysteine 768, cysteine 762–cysteine 777, cysteine 779–cysteine 788, cysteine 795–cysteine 806, cysteine 800–cysteine 815, cysteine 817–cysteine 826, cysteine 833–cysteine 844, cysteine 838–cysteine 855, cysteine 857–cysteine 866, cysteine 873–cysteine 884, cysteine 878–cysteine 893, cysteine 895–cysteine 904, cysteine 911–cysteine 922, cysteine 916–cysteine 931, cysteine 933–cysteine 942, cysteine 949–cysteine 960, cysteine 954–cysteine 969, cysteine 971–cysteine 980, cysteine 987–cysteine 998, cysteine 992–cysteine 1007, cysteine 1009–cysteine 1018, cysteine 1025–cysteine 1036, cysteine 1030–cysteine 1045, cysteine 1047–cysteine 1056, cysteine 1063–cysteine 1074, cysteine 1068–cysteine 1083, cysteine 1085–cysteine 1094, cysteine 1101–cysteine 1122, cysteine 1116–cysteine 1131, cysteine 1133–cysteine 1142, cysteine 1149–cysteine 1160, cysteine 1154–cysteine 1169, cysteine 1171–cysteine 1180, cysteine 1187–cysteine 1198, cysteine 1192–cysteine 1207, cysteine 1209–cysteine 1218, cysteine 1238–cysteine 1253, cysteine 1255–cysteine 1264, cysteine 1271–cysteine 1284, cysteine 1276–cysteine 1293, cysteine 1295–cysteine 1304, cysteine 1311–cysteine 1322, cysteine 1316–cysteine 1334, cysteine 1336–cysteine 1345, cysteine 1352–cysteine 1363, cysteine 1357–cysteine 1372, cysteine 1374–cysteine 1383, cysteine 1391–cysteine 1403, cysteine 1397–cysteine 1414, cysteine 1416–cysteine 1425, cysteine 1449–cysteine 1472, cysteine 1454–cysteine 1467, and cysteine 1463–cysteine 1479. An O-linked (Glc...) serine glycan is attached at serine 496. 2 residues coordinate Ca(2+): aspartate 507 and lysine 508. One can recognise an EGF-like 14; calcium-binding domain in the interval 528–564; sequence DVDECASTPCKNGAKCLDGPNTYTCVCTEGYTGTHCE. O-linked (Glc...) serine glycosylation is present at serine 534. In terms of domain architecture, EGF-like 15; calcium-binding spans 566-601; sequence DIDECDPDPCHYGSCKDGVATFTCLCRPGYTGHHCE. Residues 603–639 form the EGF-like 16; calcium-binding domain; it reads NINECSSQPCRHGGTCQDRDNAYLCFCLKGTTGPNCE. Residue serine 609 is glycosylated (O-linked (Glc...) serine). Threonine 617 carries an O-linked (Fuc...) threonine glycan. An EGF-like 17; calcium-binding domain is found at 641-676; that stretch reads NLDDCASSPCDSGTCLDKIDGYECACEPGYTGSMCN. Residue serine 647 is glycosylated (O-linked (Glc...) serine). In terms of domain architecture, EGF-like 18; calcium-binding spans 678–714; it reads NIDECAGNPCHNGGTCEDGINGFTCRCPEGYHDPTCL. The O-linked (Fuc...) threonine glycan is linked to threonine 692. One can recognise an EGF-like 19; calcium-binding domain in the interval 716–751; that stretch reads EVNECNSNPCVHGACRDSLNGYKCDCDPGWSGTNCD. Serine 722 is a glycosylation site (O-linked (Glc...) serine). In terms of domain architecture, EGF-like 20 spans 753–789; that stretch reads NNNECESNPCVNGGTCKDMTSGYVCTCREGFSGPNCQ. A glycan (O-linked (Glc...) serine) is linked at serine 759. Threonine 767 carries O-linked (Fuc...) threonine glycosylation. Residue serine 784 is glycosylated (O-linked (GlcNAc) serine). In terms of domain architecture, EGF-like 21; calcium-binding spans 791-827; that stretch reads NINECASNPCLNQGTCIDDVAGYKCNCLLPYTGATCE. Serine 797 carries O-linked (Glc...) serine glycosylation. Threonine 805 carries an O-linked (Fuc...) threonine glycan. One can recognise an EGF-like 22 domain in the interval 829–867; that stretch reads VLAPCAPSPCRNGGECRQSEDYESFSCVCPTGWQGQTCE. The region spanning 869–905 is the EGF-like 23; calcium-binding domain; it reads DINECVLSPCRHGASCQNTHGGYRCHCQAGYSGRNCE. Residues 907–943 form the EGF-like 24 domain; sequence DIDDCRPNPCHNGGSCTDGINTAFCDCLPGFRGTFCE. O-linked (Fuc) serine glycosylation occurs at serine 921. Residues 945 to 981 enclose the EGF-like 25; calcium-binding domain; it reads DINECASDPCRNGANCTDCVDSYTCTCPAGFSGIHCE. The O-linked (Glc...) serine glycan is linked to serine 951. N-linked (GlcNAc...) asparagine glycosylation occurs at asparagine 959. EGF-like domains are found at residues 983–1019, 1021–1057, 1059–1095, 1097–1143, and 1145–1181; these read NTPD…SYCQ, DVNE…PNCQ, LVHW…LYCD, PSVS…SYCE, and LVDE…VNCS. Residue threonine 997 is glycosylated (O-linked (Fuc...) threonine). A glycan (O-linked (Glc...) serine) is linked at serine 1027. Threonine 1035 is a glycosylation site (O-linked (Fuc...) threonine). Serine 1065 carries O-linked (Glc...) serine glycosylation. Threonine 1159 is a glycosylation site (O-linked (Fuc...) threonine). Asparagine 1179 carries N-linked (GlcNAc...) asparagine glycosylation. The 37-residue stretch at 1183-1219 folds into the EGF-like 31; calcium-binding domain; sequence EIDECLSHPCQNGGTCLDLPNTYKCSCPRGTQGVHCE. Serine 1189 is a glycosylation site (O-linked (Glc...) serine). O-linked (Fuc...) threonine glycosylation occurs at threonine 1197. The EGF-like 32; calcium-binding domain maps to 1221-1265; the sequence is NVDDCNPPVDPVSRSPKCFNNGTCVDQVGGYSCTCPPGFVGERCE. An N-linked (GlcNAc...) asparagine glycan is attached at asparagine 1241. 4 consecutive EGF-like domains span residues 1267 to 1305, 1307 to 1346, 1348 to 1384, and 1387 to 1426; these read DVNE…RRCE, VING…ATCE, DART…PECQ, and ASSP…LLCH. Serine 1273 carries O-linked (Glc...) serine glycosylation. Threonine 1362 is a glycosylation site (O-linked (Fuc...) threonine). O-linked (GlcNAc...) threonine glycosylation is present at threonine 1379. A glycan (O-linked (Fuc...) threonine; alternate) is linked at threonine 1402. Residue threonine 1402 is glycosylated (O-linked (GalNAc...) threonine; alternate). 3 LNR repeats span residues 1449 to 1489, 1490 to 1531, and 1532 to 1571; these read CELP…PWKN, CTQS…CNPL, and YDQY…RLAA. 4 residues coordinate Ca(2+): aspartate 1457, asparagine 1460, aspartate 1475, and aspartate 1478. The N-linked (GlcNAc...) asparagine glycan is linked to asparagine 1489. Intrachain disulfides connect cysteine 1490/cysteine 1514, cysteine 1496/cysteine 1509, cysteine 1505/cysteine 1521, cysteine 1536/cysteine 1549, and cysteine 1545/cysteine 1561. Asparagine 1587 carries an N-linked (GlcNAc...) asparagine glycan. A glycan (O-linked (GalNAc...) threonine) is linked at threonine 1725. An interaction with PSEN1 region spans residues 1728–1760; the sequence is PPPPAQLHFMYVAAAAFVLLFFVGCGVLLSRKR. The helical transmembrane segment at 1736–1756 threads the bilayer; sequence FMYVAAAAFVLLFFVGCGVLL. The Cytoplasmic portion of the chain corresponds to 1757-2555; it reads SRKRRRQHGQ…QIARIPEAFK (799 aa). Lysine 1759 participates in a covalent cross-link: Glycyl lysine isopeptide (Lys-Gly) (interchain with G-Cter in ubiquitin). Positions 1780–1808 are disordered; it reads KKKRREPLGEDSVGLKPLKNASDGALMDD. The residue at position 1861 (threonine 1861) is a Phosphothreonine. 6 ANK repeats span residues 1927-1956, 1960-1990, 1994-2023, 2027-2056, 2060-2089, and 2095-2122; these read TGET…DANI, MGRT…DLDA, DGTT…DVNA, LGKS…NKDM, REET…NRDI, and RLPR…VRSP. An HIF1AN-binding region spans residues 1947-1955; that stretch reads LLEASADAN. Asparagine 1955 is subject to (3S)-3-hydroxyasparagine; by HIF1AN; partial. Residues 2014–2022 are HIF1AN-binding; sequence LINSHADVN. A (3S)-3-hydroxyasparagine; by HIF1AN modification is found at asparagine 2022. Disordered regions lie at residues 2151–2194, 2379–2447, and 2483–2555; these read PGVQ…LDSS, LVQT…QPLG, and TPPS…EAFK. Residues 2379–2408 show a composition bias toward low complexity; that stretch reads LVQTQQVQPQNLQMQQQNLQPANIQQQQSL. A compositionally biased stretch (polar residues) spans 2483–2502; the sequence is TPPSQHSYSSPVDNTPSHQL. A compositionally biased stretch (low complexity) spans 2512–2527; the sequence is PSPESPDQWSSSSPHS. Over residues 2528-2547 the composition is skewed to polar residues; the sequence is NVSDWSEGVSSPPTSMQSQI.

The protein belongs to the NOTCH family. As to quaternary structure, heterodimer of a C-terminal fragment N(TM) and an N-terminal fragment N(EC) which are probably linked by disulfide bonds. Interacts with DNER, DTX1, DTX2 and RBPJ/RBPSUH. Also interacts with MAML1, MAML2 and MAML3 which act as transcriptional coactivators for NOTCH1. The NOTCH1 intracellular domain interacts with SNW1; the interaction involves multimerized NOTCH1 NICD and is implicated in a formation of an intermediate preactivation complex which associates with DNA-bound CBF-1/RBPJ. The activated membrane-bound form interacts with AAK1 which promotes NOTCH1 stabilization. Forms a trimeric complex with FBXW7 and SGK1. Interacts with HIF1AN. HIF1AN negatively regulates the function of notch intracellular domain (NICD), accelerating myogenic differentiation. Interacts (via NICD) with SNAI1 (via zinc fingers); the interaction induces SNAI1 degradation via MDM2-mediated ubiquitination and inhibits SNAI1-induced cell invasion. Interacts (via NICD) with MDM2A. Interacts (via NICD) with BCL6; the interaction decreases MAML1 recruitment by NOTCH1 NICD on target genes DNA and inhibits NOTCH1 transactivation activity. Interacts with THBS4. Interacts (via the EGF-like repeat region) with CCN3 (via CTCK domain). Interacts (via EGF-like domains) with DLL4 (via N-terminal DSL and MNNL domains). Interacts with ZMIZ1. Interacts (via NICD domain) with MEGF10 (via the cytoplasmic domain). Interacts with DLL1 and JAG1. Interacts (via NICD domain) with PRAG1. Forms a complex with PRAG1, N1ICD and MAML1, in a MAML1-dependent manner. Interacts (via transmembrane region) with PSEN1; the interaction is direct. Interacts with ZFP64. Post-translationally, synthesized in the endoplasmic reticulum as an inactive form which is proteolytically cleaved by a furin-like convertase in the trans-Golgi network before it reaches the plasma membrane to yield an active, ligand-accessible form. Cleavage results in a C-terminal fragment N(TM) and a N-terminal fragment N(EC). Following ligand binding, it is cleaved by ADAM17 to yield a membrane-associated intermediate fragment called notch extracellular truncation (NEXT). Following endocytosis, this fragment is then cleaved by one of the catalytic subunits of gamma-secretase (PSEN1 or PSEN2), to release a Notch-derived peptide containing the intracellular domain (NICD) from the membrane. In terms of processing, phosphorylated. O-glycosylated on the EGF-like domains. O-glucosylated at Ser-435 by KDELC1 and KDELC2. Contains both O-linked fucose and O-linked glucose in the EGF-like domains 11, 12 and 13, which are interacting with the residues on DLL4. O-linked glycosylation by GALNT11 is involved in determination of left/right symmetry: glycosylation promotes activation of NOTCH1, possibly by promoting cleavage by ADAM17, modulating the balance between motile and immotile (sensory) cilia at the left-right organiser (LRO). MFNG-, RFNG- and LFNG-mediated modification of O-fucose residues at specific EGF-like domains results in inhibition of its activation by JAG1 and enhancement of its activation by DLL1 via an increased binding to DLL1. Post-translationally, ubiquitinated. Undergoes 'Lys-29'-linked polyubiquitination by ITCH; promotes the lysosomal degradation of non-activated internalized NOTCH1. Deubiquitination by USP12 is required for transport of internalized non-activated receptor from late endosomes to lysosomes for degradation. Monoubiquitination at Lys-1759 is required for activation by gamma-secretase cleavage, it promotes interaction with AAK1, which stabilizes it. Deubiquitination by EIF3F is necessary for nuclear import of activated Notch. In terms of processing, hydroxylated at Asn-1955 by HIF1AN. Hydroxylated at Asn-2022 by HIF1AN. Hydroxylation reduces affinity for HI1AN and may thus indirectly modulate negative regulation of NICD. In terms of tissue distribution, in fetal tissues most abundant in spleen, brain stem and lung. Also present in most adult tissues where it is found mainly in lymphoid tissues.

It is found in the cell membrane. The protein resides in the late endosome membrane. The protein localises to the nucleus. In terms of biological role, functions as a receptor for membrane-bound ligands Jagged-1 (JAG1), Jagged-2 (JAG2) and Delta-1 (DLL1) to regulate cell-fate determination. Upon ligand activation through the released notch intracellular domain (NICD) it forms a transcriptional activator complex with RBPJ/RBPSUH and activates genes of the enhancer of split locus. Affects the implementation of differentiation, proliferation and apoptotic programs. Involved in angiogenesis; negatively regulates endothelial cell proliferation and migration and angiogenic sprouting. Involved in the maturation of both CD4(+) and CD8(+) cells in the thymus. Important for follicular differentiation and possibly cell fate selection within the follicle. During cerebellar development, functions as a receptor for neuronal DNER and is involved in the differentiation of Bergmann glia. Represses neuronal and myogenic differentiation. May play an essential role in postimplantation development, probably in some aspect of cell specification and/or differentiation. May be involved in mesoderm development, somite formation and neurogenesis. May enhance HIF1A function by sequestering HIF1AN away from HIF1A. Required for the THBS4 function in regulating protective astrogenesis from the subventricular zone (SVZ) niche after injury. Involved in determination of left/right symmetry by modulating the balance between motile and immotile (sensory) cilia at the left-right organiser (LRO). This chain is Neurogenic locus notch homolog protein 1 (NOTCH1), found in Homo sapiens (Human).